A 183-amino-acid chain; its full sequence is Translation initiation factor IF-3 (183 aa).

Belongs to the IF-3 family. As to quaternary structure, monomer.

The protein localises to the cytoplasm. Functionally, IF-3 binds to the 30S ribosomal subunit and shifts the equilibrium between 70S ribosomes and their 50S and 30S subunits in favor of the free subunits, thus enhancing the availability of 30S subunits on which protein synthesis initiation begins. The sequence is that of Translation initiation factor IF-3 from Pseudomonas aeruginosa (strain ATCC 15692 / DSM 22644 / CIP 104116 / JCM 14847 / LMG 12228 / 1C / PRS 101 / PAO1).